We begin with the raw amino-acid sequence, 454 residues long: MSHNDTIVAQATPPGRGGVGILRISGLKAREVAEAVLGKLPKPRYADYLPFKDADGTALDQGIALWFPGPNSFTGEDVLELQGHGGPVILDLLLKRILTLPGLRIARPGEFSERAFLNDKLDLAQAEAIADLIDASSEQAARSALNSLQGAFSARVNHLVEALTHLRIYVEAAIDFPDEEIDFLSDGKIEAQLNGVIADLDAVRAEARQGSLLREGMKVVIAGRPNAGKSSLLNALAGREAAIVTDIAGTTRDVLREHIHIDGMPLHIIDTAGLRDASDEVERIGIERAWQEIEQADRVLFMVDGTTTDAVDPAEIWPDFIARLPAKLPITVVRNKADITGETLGISEVNGHSLVRLSARTGEGVDVLRNHLKQSMGFDTNMEGGFLARRRHLQALAEAAEHLQQGKSQLLGAWAGELLAEELRLAQQALSEITGEFTSDDLLGRIFSSFCIGK.

Residues arginine 23, glutamate 80, and lysine 120 each contribute to the (6S)-5-formyl-5,6,7,8-tetrahydrofolate site. Positions 216–377 (GMKVVIAGRP…LRNHLKQSMG (162 aa)) constitute a TrmE-type G domain. Asparagine 226 is a binding site for K(+). GTP-binding positions include 226–231 (NAGKSS), 245–251 (TDIAGTT), 270–273 (DTAG), 335–338 (NKAD), and 358–360 (SAR). Serine 230 lines the Mg(2+) pocket. Threonine 245, isoleucine 247, and threonine 250 together coordinate K(+). Residue threonine 251 coordinates Mg(2+). Lysine 454 provides a ligand contact to (6S)-5-formyl-5,6,7,8-tetrahydrofolate.

It belongs to the TRAFAC class TrmE-Era-EngA-EngB-Septin-like GTPase superfamily. TrmE GTPase family. In terms of assembly, homodimer. Heterotetramer of two MnmE and two MnmG subunits. It depends on K(+) as a cofactor.

Its subcellular location is the cytoplasm. In terms of biological role, exhibits a very high intrinsic GTPase hydrolysis rate. Involved in the addition of a carboxymethylaminomethyl (cmnm) group at the wobble position (U34) of certain tRNAs, forming tRNA-cmnm(5)s(2)U34. The chain is tRNA modification GTPase MnmE from Citrobacter koseri (strain ATCC BAA-895 / CDC 4225-83 / SGSC4696).